The primary structure comprises 381 residues: 3-dehydroquinate synthase (381 aa).

Residues 81–86 (EGEVSK), 115–119 (GVVGD), 139–140 (TS), lysine 152, and lysine 161 contribute to the NAD(+) site. The Zn(2+) site is built by glutamate 194, histidine 256, and histidine 274.

This sequence belongs to the sugar phosphate cyclases superfamily. Dehydroquinate synthase family. Requires Co(2+) as cofactor. The cofactor is Zn(2+). It depends on NAD(+) as a cofactor.

It localises to the cytoplasm. The catalysed reaction is 7-phospho-2-dehydro-3-deoxy-D-arabino-heptonate = 3-dehydroquinate + phosphate. It participates in metabolic intermediate biosynthesis; chorismate biosynthesis; chorismate from D-erythrose 4-phosphate and phosphoenolpyruvate: step 2/7. In terms of biological role, catalyzes the conversion of 3-deoxy-D-arabino-heptulosonate 7-phosphate (DAHP) to dehydroquinate (DHQ). This chain is 3-dehydroquinate synthase, found in Rhodopseudomonas palustris (strain BisA53).